Here is a 399-residue protein sequence, read N- to C-terminus: Zinc finger TRAF-type-containing protein 1 (399 aa).

Residues 1–13 (MSGAEEAGGGGPA) are compositionally biased toward gly residues. A disordered region spans residues 1–21 (MSGAEEAGGGGPAAGPAGAVP). An RING-type; degenerate zinc finger spans residues 106–151 (CTVCLDLPKASVYQCTNGHLMCAGCFIHLLADARLKEEQATCPNCR). The TRAF-type zinc-finger motif lies at 152–210 (CEISKSLCCRNLAVEKAVSELPSECGFCLRQFPRSLLERHQKEECQDRVTQCKYKRIGC).

It belongs to the ZFTRAF1 family. As to quaternary structure, interacts with LGALS3. As to expression, expressed in heart, brain, liver, testis and kidney.

The protein localises to the cytoplasm. It localises to the perinuclear region. This is Zinc finger TRAF-type-containing protein 1 from Mus musculus (Mouse).